We begin with the raw amino-acid sequence, 771 residues long: Solute carrier family 7 member 14 (771 aa).

Transmembrane regions (helical) follow at residues 58-78 (LISL…SGLV), 83-103 (AGPG…LSGV), 130-150 (FVAF…TAAG), 187-207 (YPDL…ALGV), 216-236 (VLNV…FFFI), and 251-271 (WSGV…FDII). An N-linked (GlcNAc...) asparagine glycan is attached at Asn-282. 5 consecutive transmembrane segments (helical) span residues 291 to 311 (ASLV…TLMV), 336 to 356 (FVVA…SLFP), 360 to 380 (VIYA…VSSY), 384 to 404 (PVVA…LVSL), and 407 to 427 (LIEM…VCVL). Ser-465, Ser-468, and Ser-488 each carry phosphoserine. 4 helical membrane passes run 565-585 (VTIC…FIIF), 596-616 (WAIL…FVIL), 628-648 (MAPC…YLML), and 655-675 (WIRF…YGIW). Asn-676 is a glycosylation site (N-linked (GlcNAc...) asparagine). The interval 712-771 (TEGESQENWGGPAEDKGFYYQQMSDTQPNTRTSSKAKSKSKHKQNSEALIANDELDYSPE) is disordered. Polar residues predominate over residues 732-743 (QQMSDTQPNTRT). Residues 745–754 (SKAKSKSKHK) show a composition bias toward basic residues. A phosphoserine mark is found at Ser-757 and Ser-769.

It belongs to the amino acid-polyamine-organocation (APC) superfamily. Cationic amino acid transporter (CAT) (TC 2.A.3.3) family.

The protein localises to the lysosome membrane. It carries out the reaction 4-aminobutanoate(in) = 4-aminobutanoate(out). Its function is as follows. Imports 4-aminobutanoate (GABA) into lysosomes. May act as a GABA sensor that regulates mTORC2-dependent INS signaling and gluconeogenesis. The transport mechanism and substrate selectivity remain to be elucidated. The protein is Solute carrier family 7 member 14 of Bos taurus (Bovine).